A 612-amino-acid polypeptide reads, in one-letter code: tRNA(Met) cytidine acetyltransferase TmcA (612 aa).

ATP-binding positions include glutamine 136, 161–170, and arginine 284; that span reads GRGKSTLLGQ. Positions 319 to 499 constitute an N-acetyltransferase domain; that stretch reads KHASELEEAL…PAAIYALPLT (181 aa). 424-426 serves as a coordination point for acetyl-CoA; that stretch reads IAV.

The protein belongs to the RNA cytidine acetyltransferase family. TmcA subfamily.

The protein resides in the cytoplasm. It carries out the reaction cytidine(34) in elongator tRNA(Met) + acetyl-CoA + ATP + H2O = N(4)-acetylcytidine(34) in elongator tRNA(Met) + ADP + phosphate + CoA + H(+). Functionally, catalyzes the formation of N(4)-acetylcytidine (ac(4)C) at the wobble position of tRNA(Met), by using acetyl-CoA as an acetyl donor and ATP (or GTP). This is tRNA(Met) cytidine acetyltransferase TmcA from Idiomarina loihiensis (strain ATCC BAA-735 / DSM 15497 / L2-TR).